A 217-amino-acid chain; its full sequence is Small ribosomal subunit protein uS5 (217 aa).

The region spanning 49 to 112 is the S5 DRBM domain; that stretch reads LEEKVLDVKL…AQAKKNIIRV (64 aa).

Belongs to the universal ribosomal protein uS5 family. Part of the 30S ribosomal subunit. Contacts protein S4.

Functionally, with S4 and S12 plays an important role in translational accuracy. This Methanocaldococcus jannaschii (strain ATCC 43067 / DSM 2661 / JAL-1 / JCM 10045 / NBRC 100440) (Methanococcus jannaschii) protein is Small ribosomal subunit protein uS5.